Here is a 237-residue protein sequence, read N- to C-terminus: Ribonuclease PH (237 aa).

Phosphate contacts are provided by residues Arg86 and 124 to 126; that span reads GTR.

The protein belongs to the RNase PH family. Homohexameric ring arranged as a trimer of dimers.

The enzyme catalyses tRNA(n+1) + phosphate = tRNA(n) + a ribonucleoside 5'-diphosphate. Phosphorolytic 3'-5' exoribonuclease that plays an important role in tRNA 3'-end maturation. Removes nucleotide residues following the 3'-CCA terminus of tRNAs; can also add nucleotides to the ends of RNA molecules by using nucleoside diphosphates as substrates, but this may not be physiologically important. Probably plays a role in initiation of 16S rRNA degradation (leading to ribosome degradation) during starvation. This Nitrobacter winogradskyi (strain ATCC 25391 / DSM 10237 / CIP 104748 / NCIMB 11846 / Nb-255) protein is Ribonuclease PH.